The chain runs to 155 residues: SsrA-binding protein (155 aa).

Belongs to the SmpB family.

It localises to the cytoplasm. Its function is as follows. Required for rescue of stalled ribosomes mediated by trans-translation. Binds to transfer-messenger RNA (tmRNA), required for stable association of tmRNA with ribosomes. tmRNA and SmpB together mimic tRNA shape, replacing the anticodon stem-loop with SmpB. tmRNA is encoded by the ssrA gene; the 2 termini fold to resemble tRNA(Ala) and it encodes a 'tag peptide', a short internal open reading frame. During trans-translation Ala-aminoacylated tmRNA acts like a tRNA, entering the A-site of stalled ribosomes, displacing the stalled mRNA. The ribosome then switches to translate the ORF on the tmRNA; the nascent peptide is terminated with the 'tag peptide' encoded by the tmRNA and targeted for degradation. The ribosome is freed to recommence translation, which seems to be the essential function of trans-translation. The sequence is that of SsrA-binding protein from Clostridium acetobutylicum (strain ATCC 824 / DSM 792 / JCM 1419 / IAM 19013 / LMG 5710 / NBRC 13948 / NRRL B-527 / VKM B-1787 / 2291 / W).